Consider the following 396-residue polypeptide: Ribosomal RNA large subunit methyltransferase I (396 aa).

The region spanning 2 to 81 is the PUA domain; the sequence is SVRLVLAKGR…ETIDIAFFTR (80 aa).

The protein belongs to the methyltransferase superfamily. RlmI family.

The protein localises to the cytoplasm. It carries out the reaction cytidine(1962) in 23S rRNA + S-adenosyl-L-methionine = 5-methylcytidine(1962) in 23S rRNA + S-adenosyl-L-homocysteine + H(+). In terms of biological role, specifically methylates the cytosine at position 1962 (m5C1962) of 23S rRNA. This is Ribosomal RNA large subunit methyltransferase I from Cronobacter sakazakii (strain ATCC BAA-894) (Enterobacter sakazakii).